A 229-amino-acid polypeptide reads, in one-letter code: Dolichyldiphosphatase 1 (229 aa).

Transmembrane regions (helical) follow at residues 27–47 (LFNA…ITLI), 94–114 (MPSS…LFYL), 120–140 (FGSK…AAGV), and 156–176 (FCGS…IEYI).

This sequence belongs to the dolichyldiphosphatase family.

It localises to the endoplasmic reticulum membrane. It carries out the reaction a di-trans,poly-cis-dolichyl diphosphate + H2O = a di-trans,poly-cis-dolichyl phosphate + phosphate + H(+). Its pathway is protein modification; protein glycosylation. Required for efficient N-glycosylation. Necessary for maintaining optimal levels of dolichol-linked oligosaccharides. Hydrolyzes dolichyl pyrophosphate at a very high rate and dolichyl monophosphate at a much lower rate. Does not act on phosphatidate. The protein is Dolichyldiphosphatase 1 (dolpp1) of Dictyostelium discoideum (Social amoeba).